The primary structure comprises 186 residues: MKAGAVESGEISKGAPPRKGLIRGLSIMDFILRIVAAIATLGSALGMGTTRQTLPFSTQFVKFRAVFSDVPTFVFFVTSNSIVCGYLVLSLVLSFFHIVRSAAVKSRVLQVFLDTVMYGLLTTGASAATAIVYEAHYGNSNTNWFPFCRQYNHFCKQISGSLIGSFIAVVLFIILILMSAISISKH.

The Cytoplasmic segment spans residues 1–26; it reads MKAGAVESGEISKGAPPRKGLIRGLS. Residues 27-47 traverse the membrane as a helical segment; the sequence is IMDFILRIVAAIATLGSALGM. Residues 48–72 are Extracellular-facing; it reads GTTRQTLPFSTQFVKFRAVFSDVPT. The helical transmembrane segment at 73 to 93 threads the bilayer; that stretch reads FVFFVTSNSIVCGYLVLSLVL. At 94 to 110 the chain is on the cytoplasmic side; it reads SFFHIVRSAAVKSRVLQ. Residues 111–131 form a helical membrane-spanning segment; that stretch reads VFLDTVMYGLLTTGASAATAI. Over 132–162 the chain is Extracellular; the sequence is VYEAHYGNSNTNWFPFCRQYNHFCKQISGSL. Residues 163-183 traverse the membrane as a helical segment; it reads IGSFIAVVLFIILILMSAISI. At 184 to 186 the chain is on the cytoplasmic side; it reads SKH.

The protein belongs to the Casparian strip membrane proteins (CASP) family. In terms of assembly, homodimer and heterodimers.

It is found in the cell membrane. Regulates membrane-cell wall junctions and localized cell wall deposition. Required for establishment of the Casparian strip membrane domain (CSD) and the subsequent formation of Casparian strips, a cell wall modification of the root endodermis that determines an apoplastic barrier between the intraorganismal apoplasm and the extraorganismal apoplasm and prevents lateral diffusion. This is CASP-like protein 6 from Glycine max (Soybean).